Reading from the N-terminus, the 459-residue chain is Argininosuccinate lyase (459 aa).

This sequence belongs to the lyase 1 family. Argininosuccinate lyase subfamily.

It is found in the cytoplasm. It catalyses the reaction 2-(N(omega)-L-arginino)succinate = fumarate + L-arginine. The protein operates within amino-acid biosynthesis; L-arginine biosynthesis; L-arginine from L-ornithine and carbamoyl phosphate: step 3/3. This Bacillus licheniformis (strain ATCC 14580 / DSM 13 / JCM 2505 / CCUG 7422 / NBRC 12200 / NCIMB 9375 / NCTC 10341 / NRRL NRS-1264 / Gibson 46) protein is Argininosuccinate lyase.